We begin with the raw amino-acid sequence, 98 residues long: Putative membrane protein insertion efficiency factor (98 aa).

The protein belongs to the UPF0161 family.

It localises to the cell inner membrane. In terms of biological role, could be involved in insertion of integral membrane proteins into the membrane. The polypeptide is Putative membrane protein insertion efficiency factor (Cupriavidus pinatubonensis (strain JMP 134 / LMG 1197) (Cupriavidus necator (strain JMP 134))).